The following is a 352-amino-acid chain: C-C chemokine receptor type 5 (352 aa).

Residues 1–30 (MDYQVSSPTYDIDYYTSEPCQKVNVKQIAA) are Extracellular-facing. Sulfotyrosine is present on Y3. O-linked (GalNAc...) serine glycans are attached at residues S6 and S7. Sulfotyrosine occurs at positions 10, 14, and 15. Intrachain disulfides connect C20–C269 and C101–C178. The chain crosses the membrane as a helical span at residues 31 to 58 (RLLPPLYSLVFIFGFVGNILVVLILINC). Topologically, residues 59-68 (KRLKSMTDIY) are cytoplasmic. A helical transmembrane segment spans residues 69 to 89 (LLNLAISDLFFLLTVPFWAHY). Residues 90-102 (AAAQWDFGNTMCQ) lie on the Extracellular side of the membrane. Residues 103–124 (LLTGLYFIGFFSGIFFIILLTI) form a helical membrane-spanning segment. The Cytoplasmic portion of the chain corresponds to 125–141 (DRYLAIVHAVFALKART). The chain crosses the membrane as a helical span at residues 142-166 (VTFGVVTSVITWVVAVFASLPGIIF). At 167-198 (TRSQREGLHYTCSSHFPYSQYQFWKNFQTLKI) the chain is on the extracellular side. Residues 199 to 218 (VILGLVLPLLVMVICYSGIL) form a helical membrane-spanning segment. Topologically, residues 219-235 (KTLLRCRNEKKRHRAVR) are cytoplasmic. The chain crosses the membrane as a helical span at residues 236–260 (LIFTIMIVYFLFWAPYNIVLLLNTF). Residues 261-277 (QEFFGLNNCSSSNRLDQ) are Extracellular-facing. Residues 278 to 301 (AMQVTETLGMTHCCINPIIYAFVG) form a helical membrane-spanning segment. At 302–352 (EKFRNYLLVFFQKHIAKRFCKCCSIFQQEAPERASSVYTRSTGEQEISVGL) the chain is on the cytoplasmic side. Residues C321, C323, and C324 are each lipidated (S-palmitoyl cysteine). S336, S337, S342, and S349 each carry phosphoserine; by BARK1.

It belongs to the G-protein coupled receptor 1 family. As to quaternary structure, interacts with PRAF2. Efficient ligand binding to CCL3/MIP-1alpha and CCL4/MIP-1beta requires sulfation, O-glycosylation and sialic acid modifications. Glycosylation on Ser-6 is required for efficient binding of CCL4. Interacts with GRK2. Interacts with ARRB1 and ARRB2. Interacts with CNIH4. Interacts with S100A4; this interaction stimulates T-lymphocyte chemotaxis. In terms of processing, sulfated on at least 2 of the N-terminal tyrosines. Sulfation is required for efficient binding of the chemokines, CCL3 and CCL4. Palmitoylation in the C-terminal is important for cell surface expression. Post-translationally, phosphorylation on serine residues in the C-terminal is stimulated by binding CC chemokines especially by APO-RANTES. In terms of processing, O-glycosylated, but not N-glycosylated. Ser-6 appears to be the major site even if Ser-7 may be also O-glycosylated. Also sialylated glycans present which contribute to chemokine binding. Thr-16 and Ser-17 may also be glycosylated and, if so, with small moieties such as a T-antigen.

It localises to the cell membrane. Receptor for a number of inflammatory CC-chemokines including CCL3/MIP-1-alpha, CCL4/MIP-1-beta and RANTES and subsequently transduces a signal by increasing the intracellular calcium ion level. May play a role in the control of granulocytic lineage proliferation or differentiation. Participates in T-lymphocyte migration to the infection site by acting as a chemotactic receptor. This is C-C chemokine receptor type 5 (CCR5) from Semnopithecus entellus (Northern plains gray langur).